Consider the following 387-residue polypeptide: NifS-like protein (387 aa).

Pyridoxal 5'-phosphate is bound by residues 58–59 (SE) and 184–186 (SIN).

This sequence belongs to the class-V pyridoxal-phosphate-dependent aminotransferase family. NifS/IscS subfamily. The cofactor is pyridoxal 5'-phosphate.

It is found in the virion. In African swine fever virus (isolate Tick/South Africa/Pretoriuskop Pr4/1996) (ASFV), this protein is NifS-like protein.